The following is a 700-amino-acid chain: Elongation factor G (700 aa).

Residues 10–286 (TKVRNIGIMA…AVIDYLPNPL (277 aa)) form the tr-type G domain. GTP contacts are provided by residues 19 to 26 (AHIDAGKT), 83 to 87 (DTPGH), and 137 to 140 (NKMD).

It belongs to the TRAFAC class translation factor GTPase superfamily. Classic translation factor GTPase family. EF-G/EF-2 subfamily.

Its subcellular location is the cytoplasm. In terms of biological role, catalyzes the GTP-dependent ribosomal translocation step during translation elongation. During this step, the ribosome changes from the pre-translocational (PRE) to the post-translocational (POST) state as the newly formed A-site-bound peptidyl-tRNA and P-site-bound deacylated tRNA move to the P and E sites, respectively. Catalyzes the coordinated movement of the two tRNA molecules, the mRNA and conformational changes in the ribosome. The sequence is that of Elongation factor G from Mycolicibacterium vanbaalenii (strain DSM 7251 / JCM 13017 / BCRC 16820 / KCTC 9966 / NRRL B-24157 / PYR-1) (Mycobacterium vanbaalenii).